The primary structure comprises 72 residues: Large ribosomal subunit protein bL31 (72 aa).

It belongs to the bacterial ribosomal protein bL31 family. Type A subfamily. As to quaternary structure, part of the 50S ribosomal subunit.

Its function is as follows. Binds the 23S rRNA. This Rhodospirillum rubrum (strain ATCC 11170 / ATH 1.1.1 / DSM 467 / LMG 4362 / NCIMB 8255 / S1) protein is Large ribosomal subunit protein bL31.